We begin with the raw amino-acid sequence, 586 residues long: Isocitrate dehydrogenase kinase/phosphatase (586 aa).

ATP-binding positions include 316–322 (ARGDRGL) and Lys-337. Asp-372 is an active-site residue.

Belongs to the AceK family.

Its subcellular location is the cytoplasm. It catalyses the reaction L-seryl-[isocitrate dehydrogenase] + ATP = O-phospho-L-seryl-[isocitrate dehydrogenase] + ADP + H(+). Functionally, bifunctional enzyme which can phosphorylate or dephosphorylate isocitrate dehydrogenase (IDH) on a specific serine residue. This is a regulatory mechanism which enables bacteria to bypass the Krebs cycle via the glyoxylate shunt in response to the source of carbon. When bacteria are grown on glucose, IDH is fully active and unphosphorylated, but when grown on acetate or ethanol, the activity of IDH declines drastically concomitant with its phosphorylation. In Anaeromyxobacter dehalogenans (strain 2CP-C), this protein is Isocitrate dehydrogenase kinase/phosphatase.